A 601-amino-acid polypeptide reads, in one-letter code: Elongation factor 4 (601 aa).

Residues 5–187 (EHIRNFSIIA…AIVERLPAPE (183 aa)) enclose the tr-type G domain. Residues 17–22 (DHGKST) and 134–137 (NKID) each bind GTP.

Belongs to the TRAFAC class translation factor GTPase superfamily. Classic translation factor GTPase family. LepA subfamily.

It is found in the cell inner membrane. The enzyme catalyses GTP + H2O = GDP + phosphate + H(+). Its function is as follows. Required for accurate and efficient protein synthesis under certain stress conditions. May act as a fidelity factor of the translation reaction, by catalyzing a one-codon backward translocation of tRNAs on improperly translocated ribosomes. Back-translocation proceeds from a post-translocation (POST) complex to a pre-translocation (PRE) complex, thus giving elongation factor G a second chance to translocate the tRNAs correctly. Binds to ribosomes in a GTP-dependent manner. This chain is Elongation factor 4, found in Nitratidesulfovibrio vulgaris (strain ATCC 29579 / DSM 644 / CCUG 34227 / NCIMB 8303 / VKM B-1760 / Hildenborough) (Desulfovibrio vulgaris).